Here is a 351-residue protein sequence, read N- to C-terminus: Thiamine-phosphate synthase (351 aa).

The unknown stretch occupies residues 1-128 (MLNSNTKDHE…SKIASEIRYE (128 aa)). Residues 129–351 (IYTVEIDLLS…MILKELSHEN (223 aa)) form a thiamine-phosphate synthase region. 4-amino-2-methyl-5-(diphosphooxymethyl)pyrimidine-binding positions include 180-184 (QHRFK) and asparagine 212. Mg(2+) is bound by residues aspartate 213 and aspartate 232. Serine 251 is a binding site for 4-amino-2-methyl-5-(diphosphooxymethyl)pyrimidine. 277–279 (TTT) lines the 2-[(2R,5Z)-2-carboxy-4-methylthiazol-5(2H)-ylidene]ethyl phosphate pocket. 4-amino-2-methyl-5-(diphosphooxymethyl)pyrimidine is bound at residue lysine 280. Glycine 307 provides a ligand contact to 2-[(2R,5Z)-2-carboxy-4-methylthiazol-5(2H)-ylidene]ethyl phosphate.

This sequence belongs to the thiamine-phosphate synthase family. It depends on Mg(2+) as a cofactor.

The enzyme catalyses 2-[(2R,5Z)-2-carboxy-4-methylthiazol-5(2H)-ylidene]ethyl phosphate + 4-amino-2-methyl-5-(diphosphooxymethyl)pyrimidine + 2 H(+) = thiamine phosphate + CO2 + diphosphate. The catalysed reaction is 2-(2-carboxy-4-methylthiazol-5-yl)ethyl phosphate + 4-amino-2-methyl-5-(diphosphooxymethyl)pyrimidine + 2 H(+) = thiamine phosphate + CO2 + diphosphate. It carries out the reaction 4-methyl-5-(2-phosphooxyethyl)-thiazole + 4-amino-2-methyl-5-(diphosphooxymethyl)pyrimidine + H(+) = thiamine phosphate + diphosphate. The protein operates within cofactor biosynthesis; thiamine diphosphate biosynthesis; thiamine phosphate from 4-amino-2-methyl-5-diphosphomethylpyrimidine and 4-methyl-5-(2-phosphoethyl)-thiazole: step 1/1. Functionally, condenses 4-methyl-5-(beta-hydroxyethyl)thiazole monophosphate (THZ-P) and 2-methyl-4-amino-5-hydroxymethyl pyrimidine pyrophosphate (HMP-PP) to form thiamine monophosphate (TMP). The sequence is that of Thiamine-phosphate synthase from Prochlorococcus marinus (strain AS9601).